Consider the following 501-residue polypeptide: Aspartyl/glutamyl-tRNA(Asn/Gln) amidotransferase subunit B (501 aa).

The interval Val-271 to Phe-299 is disordered. Residues Arg-288 to Phe-299 show a composition bias toward basic and acidic residues.

Belongs to the GatB/GatE family. GatB subfamily. Heterotrimer of A, B and C subunits.

The catalysed reaction is L-glutamyl-tRNA(Gln) + L-glutamine + ATP + H2O = L-glutaminyl-tRNA(Gln) + L-glutamate + ADP + phosphate + H(+). It carries out the reaction L-aspartyl-tRNA(Asn) + L-glutamine + ATP + H2O = L-asparaginyl-tRNA(Asn) + L-glutamate + ADP + phosphate + 2 H(+). Its function is as follows. Allows the formation of correctly charged Asn-tRNA(Asn) or Gln-tRNA(Gln) through the transamidation of misacylated Asp-tRNA(Asn) or Glu-tRNA(Gln) in organisms which lack either or both of asparaginyl-tRNA or glutaminyl-tRNA synthetases. The reaction takes place in the presence of glutamine and ATP through an activated phospho-Asp-tRNA(Asn) or phospho-Glu-tRNA(Gln). In Corynebacterium diphtheriae (strain ATCC 700971 / NCTC 13129 / Biotype gravis), this protein is Aspartyl/glutamyl-tRNA(Asn/Gln) amidotransferase subunit B.